A 2335-amino-acid chain; its full sequence is uncharacterized protein (2335 aa).

Helical transmembrane passes span 114 to 134 (FMIGLLNSVFLCLPTSIAHII), 148 to 167 (FISGLGTIAGNIVWIGSIVF), 172 to 194 (VVIPWLSLDLFRAFLGFVLIVKY), 214 to 234 (IFFLTFLLSFTEQTTIYPFLS), 255 to 275 (EFGFVHLCYLLGILVGSLSLL), and 307 to 327 (FVNLTFLYLTMICAISNIAYF). The span at 1043 to 1052 (ATSESISFNQ) shows a compositional bias: polar residues. A disordered region spans residues 1043–1064 (ATSESISFNQTKEKSNSTLGRL). 2 coiled-coil regions span residues 1174–1202 (VTLKKEKYENKKQKHERYLKNRLERMKEA) and 1417–1447 (KKRENALSKRRKIRKTLKRLRNQNTSTEKIV). Residues 1458 to 1471 (QTSQLTKNSFNPSR) are compositionally biased toward polar residues. Positions 1458-1479 (QTSQLTKNSFNPSRQKTDKNLE) are disordered. Residues 2086–2106 (VWFPSGSLSQQVLPVHYIYVF) form a helical membrane-spanning segment. The interval 2200 to 2222 (KQEKRILKSKQRRKITDSKQSTE) is disordered.

It belongs to the ycf78 family.

Its subcellular location is the plastid. It is found in the chloroplast membrane. This is an uncharacterized protein from Tetradesmus obliquus (Green alga).